Consider the following 174-residue polypeptide: Ribosome maturation factor RimM (174 aa).

One can recognise a PRC barrel domain in the interval 98 to 172; sequence AGEYYYHQIV…VVTVELMEGL (75 aa).

The protein belongs to the RimM family. Binds ribosomal protein uS19.

The protein localises to the cytoplasm. Functionally, an accessory protein needed during the final step in the assembly of 30S ribosomal subunit, possibly for assembly of the head region. Essential for efficient processing of 16S rRNA. May be needed both before and after RbfA during the maturation of 16S rRNA. It has affinity for free ribosomal 30S subunits but not for 70S ribosomes. The chain is Ribosome maturation factor RimM from Lactiplantibacillus plantarum (strain ATCC BAA-793 / NCIMB 8826 / WCFS1) (Lactobacillus plantarum).